Consider the following 333-residue polypeptide: tRNA(Ile)-lysidine synthase (333 aa).

An ATP-binding site is contributed by 33-38 (SGGADS).

Belongs to the tRNA(Ile)-lysidine synthase family.

Its subcellular location is the cytoplasm. It carries out the reaction cytidine(34) in tRNA(Ile2) + L-lysine + ATP = lysidine(34) in tRNA(Ile2) + AMP + diphosphate + H(+). Ligates lysine onto the cytidine present at position 34 of the AUA codon-specific tRNA(Ile) that contains the anticodon CAU, in an ATP-dependent manner. Cytidine is converted to lysidine, thus changing the amino acid specificity of the tRNA from methionine to isoleucine. This is tRNA(Ile)-lysidine synthase from Salinispora tropica (strain ATCC BAA-916 / DSM 44818 / JCM 13857 / NBRC 105044 / CNB-440).